A 270-amino-acid chain; its full sequence is Ribonuclease HII (270 aa).

The region spanning 84 to 270 (RYIAGVDEVG…HRNSFLTKLL (187 aa)) is the RNase H type-2 domain. D90, E91, and D186 together coordinate a divalent metal cation.

The protein belongs to the RNase HII family. Requires Mn(2+) as cofactor. It depends on Mg(2+) as a cofactor.

The protein localises to the cytoplasm. The enzyme catalyses Endonucleolytic cleavage to 5'-phosphomonoester.. Functionally, endonuclease that specifically degrades the RNA of RNA-DNA hybrids. This Clostridium beijerinckii (strain ATCC 51743 / NCIMB 8052) (Clostridium acetobutylicum) protein is Ribonuclease HII.